Here is a 560-residue protein sequence, read N- to C-terminus: NAD-dependent malic enzyme (560 aa).

Catalysis depends on Tyr100, which acts as the Proton donor. Residue Arg153 coordinates NAD(+). Lys171 (proton acceptor) is an active-site residue. A divalent metal cation is bound by residues Glu242, Asp243, and Asp266. Positions 266 and 413 each coordinate NAD(+).

It belongs to the malic enzymes family. As to quaternary structure, homotetramer. It depends on Mg(2+) as a cofactor. Mn(2+) is required as a cofactor.

The catalysed reaction is (S)-malate + NAD(+) = pyruvate + CO2 + NADH. The enzyme catalyses oxaloacetate + H(+) = pyruvate + CO2. The polypeptide is NAD-dependent malic enzyme (Psychrobacter arcticus (strain DSM 17307 / VKM B-2377 / 273-4)).